Reading from the N-terminus, the 205-residue chain is Potassium-transporting ATPase KdpC subunit (205 aa).

A helical transmembrane segment spans residues 9–29 (VFAVLFLFILGFVYPTVTSLI).

This sequence belongs to the KdpC family. As to quaternary structure, the system is composed of three essential subunits: KdpA, KdpB and KdpC.

It is found in the cell membrane. Part of the high-affinity ATP-driven potassium transport (or Kdp) system, which catalyzes the hydrolysis of ATP coupled with the electrogenic transport of potassium into the cytoplasm. This subunit acts as a catalytic chaperone that increases the ATP-binding affinity of the ATP-hydrolyzing subunit KdpB by the formation of a transient KdpB/KdpC/ATP ternary complex. This chain is Potassium-transporting ATPase KdpC subunit, found in Thermoplasma acidophilum (strain ATCC 25905 / DSM 1728 / JCM 9062 / NBRC 15155 / AMRC-C165).